Here is a 622-residue protein sequence, read N- to C-terminus: DNA mismatch repair protein MutL (622 aa).

Positions 376–401 (REVREGSSTGRAGNYQPPEPPSREAM) are disordered.

This sequence belongs to the DNA mismatch repair MutL/HexB family.

Functionally, this protein is involved in the repair of mismatches in DNA. It is required for dam-dependent methyl-directed DNA mismatch repair. May act as a 'molecular matchmaker', a protein that promotes the formation of a stable complex between two or more DNA-binding proteins in an ATP-dependent manner without itself being part of a final effector complex. This is DNA mismatch repair protein MutL from Aeromonas hydrophila subsp. hydrophila (strain ATCC 7966 / DSM 30187 / BCRC 13018 / CCUG 14551 / JCM 1027 / KCTC 2358 / NCIMB 9240 / NCTC 8049).